The following is a 76-amino-acid chain: Acyl carrier protein (76 aa).

Residues 1 to 76 (MSLEEKVKNI…DVIEYIKAHT (76 aa)) form the Carrier domain. Position 36 is an O-(pantetheine 4'-phosphoryl)serine (Ser-36).

It belongs to the acyl carrier protein (ACP) family. 4'-phosphopantetheine is transferred from CoA to a specific serine of apo-ACP by AcpS. This modification is essential for activity because fatty acids are bound in thioester linkage to the sulfhydryl of the prosthetic group.

The protein localises to the cytoplasm. The protein operates within lipid metabolism; fatty acid biosynthesis. Functionally, carrier of the growing fatty acid chain in fatty acid biosynthesis. The sequence is that of Acyl carrier protein from Desulfatibacillum aliphaticivorans.